The chain runs to 393 residues: S-adenosylmethionine synthase 1 (393 aa).

Position 9 (Glu9) interacts with Mg(2+). His15 contributes to the ATP binding site. Glu43 provides a ligand contact to K(+). L-methionine-binding residues include Glu56 and Gln99. At Cys114 the chain carries S-nitrosocysteine. Residues 167 to 169 (DGK), 235 to 238 (SGRF), Asp246, 252 to 253 (RK), Ala269, Lys273, and Lys277 each bind ATP. Asp246 is an L-methionine binding site. Lys277 provides a ligand contact to L-methionine.

It belongs to the AdoMet synthase family. As to quaternary structure, homotetramer. Interacts with GRF3. It depends on Mn(2+) as a cofactor. Requires Mg(2+) as cofactor. Co(2+) is required as a cofactor. K(+) serves as cofactor. In terms of processing, S-nitrosylated in the presence of NO. The inhibition of SAM1 activity by S-nitrosylation could contribute to the cross-talk between ethylene and NO signaling. Highly expressed in stems and roots.

Its subcellular location is the cytoplasm. It catalyses the reaction L-methionine + ATP + H2O = S-adenosyl-L-methionine + phosphate + diphosphate. It participates in amino-acid biosynthesis; S-adenosyl-L-methionine biosynthesis; S-adenosyl-L-methionine from L-methionine: step 1/1. Reversibly inhibited by NO. Inhibited by 5,5'-dithiobis-2-nitrobenzoic acid (DTNB) and N-ethylmaleimide (NEM) (in vitro). Functionally, catalyzes the formation of S-adenosylmethionine from methionine and ATP. The reaction comprises two steps that are both catalyzed by the same enzyme: formation of S-adenosylmethionine (AdoMet) and triphosphate, and subsequent hydrolysis of the triphosphate. This is S-adenosylmethionine synthase 1 (SAM1) from Arabidopsis thaliana (Mouse-ear cress).